The chain runs to 120 residues: Cu-Zn superoxide dismutase-like protein OPG175 (120 aa).

Cys-52 and Cys-102 form a disulfide bridge.

This sequence belongs to the Cu-Zn superoxide dismutase family.

The protein resides in the virion. It localises to the host cytoplasm. Functionally, superoxide dismutase-like protein with no enzymatic activity. The sequence is that of Cu-Zn superoxide dismutase-like protein OPG175 (OPG175) from Vaccinia virus (strain Tashkent) (VACV).